Reading from the N-terminus, the 449-residue chain is Na(+)/H(+) antiporter NhaA 1 (449 aa).

11 helical membrane passes run isoleucine 32–asparagine 52, glycine 87–glycine 107, methionine 114–leucine 134, glycine 145–glycine 165, valine 174–glycine 194, threonine 202–valine 222, alanine 233–leucine 253, tryptophan 318–isoleucine 338, leucine 347–leucine 367, tryptophan 382–isoleucine 402, and leucine 417–phenylalanine 437.

It belongs to the NhaA Na(+)/H(+) (TC 2.A.33) antiporter family.

It localises to the cell inner membrane. The catalysed reaction is Na(+)(in) + 2 H(+)(out) = Na(+)(out) + 2 H(+)(in). Na(+)/H(+) antiporter that extrudes sodium in exchange for external protons. The chain is Na(+)/H(+) antiporter NhaA 1 from Acidiphilium cryptum (strain JF-5).